Reading from the N-terminus, the 270-residue chain is F420 non-reducing hydrogenase II cytochrome subunit (270 aa).

The next 5 helical transmembrane spans lie at 27–47 (AIAM…WEFM), 57–77 (MIAV…NIFS), 139–159 (ILIP…IVLY), 173–193 (WIIS…VGFL), and 195–215 (VLHL…VGIL).

Belongs to the HupC/HyaC/HydC family. Composed of a large subunit (VhtA), a small subunit (VhtG) and a cytochrome subunit (VhtC). Heme b serves as cofactor.

The protein localises to the cell membrane. It catalyses the reaction methanophenazine + H2 = dihydromethanophenazine. In terms of biological role, part of the F420 non-reducing hydrogenase II complex that catalyzes the reduction of methanophenazine to dihydromethanophenazine. The polypeptide is F420 non-reducing hydrogenase II cytochrome subunit (Methanosarcina mazei (strain ATCC BAA-159 / DSM 3647 / Goe1 / Go1 / JCM 11833 / OCM 88) (Methanosarcina frisia)).